Here is a 481-residue protein sequence, read N- to C-terminus: Surface lipoprotein assembly modifier 2 (481 aa).

An N-terminal signal peptide occupies residues 1–24 (MKNGVKQLFLLSLIGLSLTNVAWA). The N-terminal domain stretch occupies residues 24–192 (AEVARPKNDT…QYLLTLNQRN (169 aa)). A C-terminal probable beta barrel region spans residues 193–481 (QWIWQVGLNF…RIYLEIGKIF (289 aa)). 14 beta stranded membrane passes run 194-204 (WIWQVGLNFLN), 223-243 (AWEK…KKWP), 248-257 (FFSKTMFNGN), 271-281 (TVRIGGGLGYQ), 285-295 (VEVSLFPFQEK), 315-325 (LGIRLENVDWL), 329-339 (WQISTALEYGE), 353-363 (YFVSSTLFYLP), 368-377 (FWFVGMDFHR), 390-399 (KTLRLGWGQD), 404-414 (ISSRLTFSYAN), 432-441 (YTTTITLWHR), 448-458 (LTPKLSWDYQK), and 471-481 (NRIYLEIGKIF).

Belongs to the Slam family.

The protein localises to the cell outer membrane. Functionally, required for correct export to the cell surface of some cell outer membrane lipoproteins. The protein is Surface lipoprotein assembly modifier 2 of Haemophilus influenzae (strain ATCC 51907 / DSM 11121 / KW20 / Rd).